Reading from the N-terminus, the 578-residue chain is Sulfite reductase [NADPH] hemoprotein beta-component (578 aa).

Positions 441, 447, 487, and 491 each coordinate [4Fe-4S] cluster. Residue Cys491 participates in siroheme binding.

The protein belongs to the nitrite and sulfite reductase 4Fe-4S domain family. In terms of assembly, alpha(8)-beta(8). The alpha component is a flavoprotein, the beta component is a hemoprotein. Siroheme is required as a cofactor. Requires [4Fe-4S] cluster as cofactor.

It carries out the reaction hydrogen sulfide + 3 NADP(+) + 3 H2O = sulfite + 3 NADPH + 4 H(+). Its pathway is sulfur metabolism; hydrogen sulfide biosynthesis; hydrogen sulfide from sulfite (NADPH route): step 1/1. Its function is as follows. Component of the sulfite reductase complex that catalyzes the 6-electron reduction of sulfite to sulfide. This is one of several activities required for the biosynthesis of L-cysteine from sulfate. This Vibrio vulnificus (strain YJ016) protein is Sulfite reductase [NADPH] hemoprotein beta-component.